Here is a 265-residue protein sequence, read N- to C-terminus: Hydroxyethylthiazole kinase (265 aa).

Met-43 provides a ligand contact to substrate. The ATP site is built by Arg-119 and Ser-165. Residue Ala-192 coordinates substrate.

Belongs to the Thz kinase family. It depends on Mg(2+) as a cofactor.

The enzyme catalyses 5-(2-hydroxyethyl)-4-methylthiazole + ATP = 4-methyl-5-(2-phosphooxyethyl)-thiazole + ADP + H(+). The protein operates within cofactor biosynthesis; thiamine diphosphate biosynthesis; 4-methyl-5-(2-phosphoethyl)-thiazole from 5-(2-hydroxyethyl)-4-methylthiazole: step 1/1. In terms of biological role, catalyzes the phosphorylation of the hydroxyl group of 4-methyl-5-beta-hydroxyethylthiazole (THZ). The chain is Hydroxyethylthiazole kinase from Haemophilus influenzae (strain 86-028NP).